The sequence spans 871 residues: MGLTPMMRQYMEIKENYKDCILFFRLGDFYEMFFDDAKIAAAELELVLTARECGLKEKAPMCGIPYHAAKSYIGRMVNKGYKIAICEQLEDPAQSKGIVKRGIIKVITPGTYMDSYFLDENENNYIMCLYINNNEGSNCALCFADISTGEFNCTDTPFNLSVILDEICKFNPREIIIQEDIDSNILQGIVEVFNETFSRVDECYFQKGEEVLREQFKDLNLREYTPEIIKCGGALVKYIKHTQKTNLSHINKFQYYNIVDYLTIDINSKRNLEIVESLRESKKKGSLLGVIDKTNTSMGGRQLRKWIEQPLIDRNKIMERLDSVEEILNNICYHEDLKEALKNIYDIERLAGKISSKSVNAKELNSLKSSIEKIPDIKVILSNFETSLLKNMYKNLDELKDIYMLLDKAILDNPSVSLKEGNLIKEGYDSEIDRLKEAKVKGKDWIASLESSERELTKIKSLKIGYNKVFGYYIEVTKSNLNLVPEHRYIRKQTLSNAERYITPELKEMEDKILGAEEKLIYLEYNAFVEVRDKVEKEVTRIQNSARIISEVDCLTSLARAALENNYCKPEITLSDRVYIEEGRHPVVENMLSTGEFVSNDTDIDTGENQLLLITGPNMAGKSTYMRQVALVTIMAQIGSFVPAKSASISICDKIFTRIGASDDLASGKSTFMVEMWEVSNILKNATNKSLILLDEVGRGTSTYDGLSIAWSVIEYICRESKLRCKTLFATHYHELTKLEGKIKGVKNYCVSVKEVENNIVFLRKIIRGGADQSYGIEVAKLAGLPEEVLKRAREILNSLETEKTEESMEGTNLPKKKKEEKTSSQGEQLKFLDIEKENLINEIRDIDILNMTPMEGFNKLYDIIKKVKSI.

ATP is bound at residue 616–623; that stretch reads GPNMAGKS. A disordered region spans residues 801–825; sequence ETEKTEESMEGTNLPKKKKEEKTSS.

It belongs to the DNA mismatch repair MutS family.

Functionally, this protein is involved in the repair of mismatches in DNA. It is possible that it carries out the mismatch recognition step. This protein has a weak ATPase activity. The chain is DNA mismatch repair protein MutS from Clostridium kluyveri (strain NBRC 12016).